Reading from the N-terminus, the 480-residue chain is tRNA-2-methylthio-N(6)-dimethylallyladenosine synthase (480 aa).

Residues 31–151 (RGLHVITWGC…LPEMVARAAR (121 aa)) form the MTTase N-terminal domain. [4Fe-4S] cluster is bound by residues Cys-40, Cys-76, Cys-114, Cys-192, Cys-196, and Cys-199. A Radical SAM core domain is found at 178 to 410 (SPGGITSFLT…QALLRTQQDA (233 aa)). The 63-residue stretch at 413-475 (DGTVGHVVPV…TNSLSGTLVQ (63 aa)) folds into the TRAM domain.

This sequence belongs to the methylthiotransferase family. MiaB subfamily. In terms of assembly, monomer. [4Fe-4S] cluster is required as a cofactor.

It localises to the cytoplasm. It catalyses the reaction N(6)-dimethylallyladenosine(37) in tRNA + (sulfur carrier)-SH + AH2 + 2 S-adenosyl-L-methionine = 2-methylsulfanyl-N(6)-dimethylallyladenosine(37) in tRNA + (sulfur carrier)-H + 5'-deoxyadenosine + L-methionine + A + S-adenosyl-L-homocysteine + 2 H(+). Functionally, catalyzes the methylthiolation of N6-(dimethylallyl)adenosine (i(6)A), leading to the formation of 2-methylthio-N6-(dimethylallyl)adenosine (ms(2)i(6)A) at position 37 in tRNAs that read codons beginning with uridine. In Gluconacetobacter diazotrophicus (strain ATCC 49037 / DSM 5601 / CCUG 37298 / CIP 103539 / LMG 7603 / PAl5), this protein is tRNA-2-methylthio-N(6)-dimethylallyladenosine synthase.